The sequence spans 620 residues: Chaperone protein HscA homolog (620 aa).

The protein belongs to the heat shock protein 70 family.

In terms of biological role, chaperone involved in the maturation of iron-sulfur cluster-containing proteins. Has a low intrinsic ATPase activity which is markedly stimulated by HscB. This is Chaperone protein HscA homolog from Bordetella petrii (strain ATCC BAA-461 / DSM 12804 / CCUG 43448).